The sequence spans 258 residues: uncharacterized protein (258 aa).

The Cyclin N-terminal domain occupies 16–148 (EAFDSFEYAE…VLRALNFDTH (133 aa)).

Belongs to the cyclin family. Cyclin L subfamily.

It is found in the cytoplasm. The protein resides in the nucleus. This is an uncharacterized protein from Schizosaccharomyces pombe (strain 972 / ATCC 24843) (Fission yeast).